Here is an 865-residue protein sequence, read N- to C-terminus: Eukaryotic translation initiation factor 3 subunit C (865 aa).

Disordered stretches follow at residues 1–92 and 206–243; these read MSRF…AKDK and EDEE…VGKG. 2 stretches are compositionally biased toward acidic residues: residues 16–54 and 69–80; these read SSDE…DSDA and DDDSSDEEDSDA. Basic and acidic residues predominate over residues 82-92; the sequence is VTTKVKSAKDK. Over residues 226-235 the composition is skewed to acidic residues; it reads ATAEDEEDDE. In terms of domain architecture, PCI spans 606 to 780; sequence FHMHINLELL…QTVIFRKGVE (175 aa). The disordered stretch occupies residues 801 to 865; sequence SNERTLEQRT…GGALGAAVRA (65 aa). Polar residues predominate over residues 808–817; the sequence is QRTQGTSNAF. Residues 822–841 are compositionally biased toward gly residues; sequence GRGGRGGGRGRGGGRGGPRF.

This sequence belongs to the eIF-3 subunit C family. Component of the eukaryotic translation initiation factor 3 (eIF-3) complex.

It localises to the cytoplasm. In terms of biological role, component of the eukaryotic translation initiation factor 3 (eIF-3) complex, which is involved in protein synthesis of a specialized repertoire of mRNAs and, together with other initiation factors, stimulates binding of mRNA and methionyl-tRNAi to the 40S ribosome. The eIF-3 complex specifically targets and initiates translation of a subset of mRNAs involved in cell proliferation. The chain is Eukaryotic translation initiation factor 3 subunit C from Pyricularia oryzae (strain 70-15 / ATCC MYA-4617 / FGSC 8958) (Rice blast fungus).